The chain runs to 35 residues: Alpha-amanitin proprotein 2 (35 aa).

A propeptide spanning residues 1-10 (MFDTNSTRLP) is cleaved from the precursor. Isoleucine 11 carries the (3R,4R)-4,5-dihydroxyisoleucine; in form alpha-amanitin modification. The residue at position 11 (isoleucine 11) is a (3R,4S)-4-hydroxyisoleucine; in form gamma-amanitin. Positions 11–18 (IWGIGCNP) form a cross-link, cyclopeptide (Ile-Pro). Residues 12–16 (WGIGC) constitute a cross-link (2'-cysteinyl-6'-hydroxytryptophan sulfoxide (Trp-Cys)). Position 18 is a 4-hydroxyproline (proline 18). The propeptide occupies 19-35 (WTAEHVDQTLVSGNDIC).

It belongs to the MSDIN fungal toxin family. In terms of processing, processed by the macrocyclase-peptidase enzyme POPB to yield a toxic bicyclic octapeptide. POPB first removes 10 residues from the N-terminus. Conformational trapping of the remaining peptide forces the enzyme to release this intermediate rather than proceed to macrocyclization. The enzyme rebinds the remaining peptide in a different conformation and catalyzes macrocyclization of the N-terminal 8 residues.

Functionally, major toxin belonging to the bicyclic octapeptides amatoxins that acts by binding non-competitively to RNA polymerase II and greatly slowing the elongation of transcripts from target promoters. This chain is Alpha-amanitin proprotein 2, found in Galerina marginata (strain CBS 339.88).